We begin with the raw amino-acid sequence, 100 residues long: Urease subunit gamma (100 aa).

It belongs to the urease gamma subunit family. Heterotrimer of UreA (gamma), UreB (beta) and UreC (alpha) subunits. Three heterotrimers associate to form the active enzyme.

The protein resides in the cytoplasm. The enzyme catalyses urea + 2 H2O + H(+) = hydrogencarbonate + 2 NH4(+). The protein operates within nitrogen metabolism; urea degradation; CO(2) and NH(3) from urea (urease route): step 1/1. The protein is Urease subunit gamma of Escherichia coli.